Reading from the N-terminus, the 722-residue chain is Polyribonucleotide nucleotidyltransferase (722 aa).

Mg(2+) is bound by residues D487 and D493. The region spanning 554-613 (PRIETFKIPTDKIREVIGTGGKVIREIVEKTGAKVNIEDDGTVKVASSDGESIKAAIKWI) is the KH domain. Residues 623-691 (GEIYEGTVVK…DRGKTRLSMK (69 aa)) enclose the S1 motif domain. The disordered stretch occupies residues 691–722 (KVVDQDTGEDLEAKQKAEAKAEDEAPAQAAGE). Residues 701–713 (LEAKQKAEAKAED) show a composition bias toward basic and acidic residues.

It belongs to the polyribonucleotide nucleotidyltransferase family. The cofactor is Mg(2+).

It is found in the cytoplasm. It catalyses the reaction RNA(n+1) + phosphate = RNA(n) + a ribonucleoside 5'-diphosphate. Functionally, involved in mRNA degradation. Catalyzes the phosphorolysis of single-stranded polyribonucleotides processively in the 3'- to 5'-direction. This chain is Polyribonucleotide nucleotidyltransferase, found in Rhodopseudomonas palustris (strain BisB5).